The chain runs to 596 residues: Elongation factor 4 (596 aa).

Residues 2–184 (KHIRNFSIIA…VIVDQIPPPE (183 aa)) form the tr-type G domain. GTP contacts are provided by residues 14–19 (DHGKST) and 131–134 (NKID).

The protein belongs to the TRAFAC class translation factor GTPase superfamily. Classic translation factor GTPase family. LepA subfamily.

The protein localises to the cell inner membrane. It carries out the reaction GTP + H2O = GDP + phosphate + H(+). Functionally, required for accurate and efficient protein synthesis under certain stress conditions. May act as a fidelity factor of the translation reaction, by catalyzing a one-codon backward translocation of tRNAs on improperly translocated ribosomes. Back-translocation proceeds from a post-translocation (POST) complex to a pre-translocation (PRE) complex, thus giving elongation factor G a second chance to translocate the tRNAs correctly. Binds to ribosomes in a GTP-dependent manner. This Shewanella sp. (strain ANA-3) protein is Elongation factor 4.